The sequence spans 2346 residues: Highly reducing polyketide synthase claI (2346 aa).

A Ketosynthase family 3 (KS3) domain is found at 10–412 (TPAIAVVGMA…GTNCHLIVED (403 aa)). Catalysis depends on for beta-ketoacyl synthase activity residues C183, H295, and H335. Positions 530 to 842 (IFTGQGSQWP…EYFSALKRGE (313 aa)) are malonyl-CoA:ACP transacylase (MAT) domain. Residue S622 is the For malonyltransferase activity of the active site. The interval 912-1048 (HDLLGSKILG…GLIRTSEEDS (137 aa)) is N-terminal hotdog fold. The tract at residues 912 to 1213 (HDLLGSKILG…INGLRFSSVD (302 aa)) is dehydratase (DH) domain. The PKS/mFAS DH domain maps to 912–1218 (HDLLGSKILG…FSSVDLGSVQ (307 aa)). H944 functions as the Proton acceptor; for dehydratase activity in the catalytic mechanism. A C-terminal hotdog fold region spans residues 1060 to 1218 (IHATPAQVWY…FSSVDLGSVQ (159 aa)). D1124 (proton donor; for dehydratase activity) is an active-site residue. The tract at residues 1633–1946 (GSLEALQWTQ…SARHIGKILI (314 aa)) is enoyl reductase (ER) domain. Residues 1972–2151 (TYLIVGGLRG…HSLDLGVVDA (180 aa)) are ketoreductase (KR) domain. A Carrier domain is found at 2258–2336 (SQLVEKAVTL…ALAEKMVSKV (79 aa)). S2296 is modified (O-(pantetheine 4'-phosphoryl)serine).

It depends on pantetheine 4'-phosphate as a cofactor.

The protein operates within secondary metabolite biosynthesis. Highly reducing polyketide synthase; part of the cla gene cluster that produces clavatol and ortho-quinone methide. The clavatol biosynthesis cluster cla and the terrestric acid cluster tra are both involved in the production of peniphenones and penilactones. The non-reducing PKS claF is responsible for the formation of clavatol from successive condensations of 3 malonyl-CoA units, presumably with a simple acetyl-CoA starter unit, and 2 methylation steps. The esterase claE probably collaborates with claF by catalyzing the hydrolysis of ACP-bound acyl intermediates to free the ACP from stalled intermediates. The clavatol oxidase claD then converts clavatol to hydroxyclavatol. Spontaneous dehydration of hydroxyclavatol leads to the accumulation of the highly active ortho-quinone methide. On the other hand, the PKS-NRPS hybrid traA is involved in the formation of crustosic acid, with the help of traB and traD. The polyketide synthase module (PKS) of traA is responsible for the synthesis of the polyketide backbone via the condensation of an acetyl-CoA starter unit with 3 malonyl-CoA units. The downstream nonribosomal peptide synthetase (NRPS) module then amidates the carboxyl end of the polyketide with L-malic acid. Because traA lacks a designated enoylreductase (ER) domain, the required activity is provided the enoyl reductase traG. Crustosic acid undergoes decarboxylation and isomerization to the terrestric acid, catalyzed by the 2-oxoglutarate-dependent dioxygenase traH. Both acids are further converted to the 2 gamma-butyrolactones (R)-5-methyltetronic acid and (S)-5-carboxylmethyltetronic acid, with involvement of the cytochrome P450 monooxygenase claJ. Spontaneous addition of the methide to these gamma-butyrolactones leads to peniphenone D and penilactone D, which undergo again stereospecific attacking by methide to give penilactones A and B. The function of the highly reducing polyketide synthase claI has not been investigated yet. The protein is Highly reducing polyketide synthase claI of Penicillium crustosum (Blue mold fungus).